Reading from the N-terminus, the 537-residue chain is DEAD-box ATP-dependent RNA helicase 5 (537 aa).

The interval 1–97 (MAGQKQELPV…EDLGEGESEQ (97 aa)) is disordered. A coiled-coil region spans residues 22–80 (TNKKKKKSKKNKHTEENHEVEEVPQEVTNGVEEELSNKEKKKKRKREEKESEKNKKKDV). Residues 23 to 33 (NKKKKKSKKNK) are compositionally biased toward basic residues. Basic and acidic residues predominate over residues 68-87 (EEKESEKNKKKDVPEKKLEA). Positions 116–142 (KTFAESNLPENVLDCCKTFEKPSPIQS) match the Q motif motif. The Helicase ATP-binding domain maps to 145-324 (WPFLLDGRDL…QEFMDPNPIK (180 aa)). Residue 158-165 (AKTGSGKT) participates in ATP binding. Positions 272–275 (DEAD) match the DEAD box motif. Positions 349–500 (ARDQRLIALL…VVPADLLKFG (152 aa)) constitute a Helicase C-terminal domain. The residue at position 533 (S533) is a Phosphoserine.

The protein belongs to the DEAD box helicase family. DDX5/DBP2 subfamily.

It localises to the nucleus. Its subcellular location is the nucleolus. It carries out the reaction ATP + H2O = ADP + phosphate + H(+). In terms of biological role, ATP-dependent RNA helicase required for 60S ribosomal subunit synthesis. Involved in efficient pre-rRNA processing, predominantly at site A3, which is necessary for the normal formation of 25S and 5.8S rRNAs. In Arabidopsis thaliana (Mouse-ear cress), this protein is DEAD-box ATP-dependent RNA helicase 5 (RH5).